Reading from the N-terminus, the 510-residue chain is G-protein coupled receptor dmsr-1 (510 aa).

Over 1–35 the chain is Extracellular; that stretch reads MEFTECKTTFIHLPDKSFLYDVFVSVYNFYHPIHA. Residues 36-56 traverse the membrane as a helical segment; the sequence is YLSIFLCVLGTIANFCNIVVL. Residues 57-64 are Cytoplasmic-facing; sequence TRRTMRTP. The chain crosses the membrane as a helical span at residues 65–85; that stretch reads VNMILTAMASCDTVVLFSNLI. Topologically, residues 86–107 are extracellular; sequence YTTHYSFVAFKFCHPKHWSYSW. Residues 108 to 128 form a helical membrane-spanning segment; it reads ALFLIAHAHLSLVAHSSSVWL. At 129 to 155 the chain is on the cytoplasmic side; it reads SVMLALVRYVTLRSRGNMGGMQVTLRH. Residues 156-176 traverse the membrane as a helical segment; the sequence is SYYAVAVTVSLVAVLNAPNFL. At 177–223 the chain is on the extracellular side; the sequence is NYKINEQPLNETCTDLDPMFWNSPAYLPGIADIAKANSCLVFRLSYW. A glycan (N-linked (GlcNAc...) asparagine) is linked at Asn-186. A helical membrane pass occupies residues 224–244; the sequence is ISGMVFKVLPCALLSLFVWLL. The Cytoplasmic segment spans residues 245-307; the sequence is LRILREVREN…GERVDRTTHM (63 aa). A helical membrane pass occupies residues 308-328; the sequence is LLAIVAVMLVTELPQGIMAVL. Over 329-343 the chain is Extracellular; that stretch reads SGMCSEEFRIYIYNN. A helical transmembrane segment spans residues 344 to 364; that stretch reads LGDILDLFSLCGSCCSFIIYC. At 365–510 the chain is on the cytoplasmic side; the sequence is SMSGQFRNEF…DGIRGHFQNI (146 aa). A disordered region spans residues 452-510; the sequence is GCDSITPCSPMPTSFPSSPLPPIRSGEDESTDETSHLLNSSGPNSTASADGIRGHFQNI. A compositionally biased stretch (polar residues) spans 487-499; the sequence is HLLNSSGPNSTAS.

It belongs to the G-protein coupled receptor 1 family. In terms of tissue distribution, expressed in head neurons including the RID neuron and the paired AIY neurons, and in tail neurons including the paired PHA and PHB neurons. Not expressed in AVE and AVA neurons.

The protein resides in the cell membrane. Functionally, G-protein coupled receptor. G-protein coupled receptor for flp-13 RFamide neuropeptides in vitro. Upon activation by flp-13 RFamide neuropeptides, promotes sleep in response to cellular stress also known as stress-induced sleep (SIS), probably by inhibiting the activity of wake-promoting neurons. The polypeptide is G-protein coupled receptor dmsr-1 (Caenorhabditis elegans).